The primary structure comprises 148 residues: Small ribosomal subunit protein bS16 (148 aa).

Residues 111–122 show a composition bias toward low complexity; that stretch reads AAAGEEPVAEAT. Residues 111-148 form a disordered region; sequence AAAGEEPVAEATTPKKKGGKKAEAEDKAEEQKSEEGQA. Basic and acidic residues predominate over residues 130–148; the sequence is KKAEAEDKAEEQKSEEGQA.

This sequence belongs to the bacterial ribosomal protein bS16 family.

The sequence is that of Small ribosomal subunit protein bS16 from Saccharopolyspora erythraea (strain ATCC 11635 / DSM 40517 / JCM 4748 / NBRC 13426 / NCIMB 8594 / NRRL 2338).